A 357-amino-acid chain; its full sequence is O-methyltransferase pgmB (357 aa).

Residue aspartate 206 participates in S-adenosyl-L-methionine binding. The active-site Proton acceptor is histidine 256.

This sequence belongs to the class I-like SAM-binding methyltransferase superfamily. Cation-independent O-methyltransferase family.

The protein operates within pigment biosynthesis. Its pathway is secondary metabolite biosynthesis. O-methyltransferase; part of the gene cluster that mediates the biosynthesis of pleosporalin A, ascomycone A, as well as a third cryptic naphthoquinone derived pigment, all responsible for the coloration of conidia. Specifically methylates position C-6 of the pgmA product 3-acetonyl-1,6,8-trihydroxy-2-naphthaldehyde to yield fusarubinaldehyde. The pathway begins with the biosynthesis of the cyclized heptaketide 3-acetonyl-1,6,8-trihydroxy-2-naphthaldehyde by the NR-PKS pgmA. The C-6 hydroxyl group is further methylated by the O-methyltransferase pgmB to yield fusarubinaldehyde which is in turn oxidized by the cytochrome P450 monooxygenase pgmC at C-9. The C-1 hydroxyl group is then methylated spontaneously. Although pgmE, pgmD and pgmH are essential for the production of pleosporalin A, it is not the case for the 2 other final products and it remains difficult to assign a specific function to each enzyme. PgmF and pgmG seem not to be involved in pigment biosynthesis although they were regulated by the cluster-specific transcription factor pgmR. The chain is O-methyltransferase pgmB from Aspergillus terreus (strain NIH 2624 / FGSC A1156).